A 398-amino-acid chain; its full sequence is MADDVSEFLGQNPETAAWLELVHGECESDKLWRYRKEFILRNLSDVCGEAEVPPPPETNHKALDRLLAYSMVWANHVFTGCRYPLPVMEKVLKMAENIKVTDAPTHTTRDELVAKVKKRGISSSNEGVEEEPCKKQKSSDHGERESSYIEDTISDGNVPSTSLNKREARLSAAQRTDVNTEFYDKSSNRRSLPVSNAKSRLNLPEEAGYKHGATQGRKSHSDIRHQTSMKGPAQSSDNALKPTRRFTTEHTKERQPFFNRLYKTVAWKLVSAGGFNANLNHEELLNTCIESLKATLEVSFVPLTDLADLPQNKTSQENTVCELRCKSVYLGMGCGKTMETAKAVASREAVKLFLKKKVVVRICKRKFNGRDVEDLVLVDEEFRPVNLPPAIKNPQEIV.

Residues 19 to 124 (LELVHGECES…KVKKRGISSS (106 aa)) form the XRN2-binding (XTBD) domain. A disordered region spans residues 118–245 (KRGISSSNEG…SDNALKPTRR (128 aa)). Residues 131–147 (EPCKKQKSSDHGERESS) show a composition bias toward basic and acidic residues. 3 stretches are compositionally biased toward polar residues: residues 154 to 163 (SDGNVPSTSL), 189 to 199 (RRSLPVSNAKS), and 226 to 238 (QTSMKGPAQSSDN).

It belongs to the CARF family.

The protein localises to the nucleus. It is found in the nucleoplasm. In terms of biological role, may regulate DNA damage response and cell proliferation. The protein is Protein CDKN2AIP homolog A (cdkn2aip-a) of Xenopus laevis (African clawed frog).